The chain runs to 1241 residues: ATP-dependent helicase/nuclease subunit A (1241 aa).

In terms of domain architecture, UvrD-like helicase ATP-binding spans Ser12–Arg485. Residue Ala33–Thr40 coordinates ATP. The UvrD-like helicase C-terminal domain maps to Gly505–Gly805.

Belongs to the helicase family. AddA subfamily. As to quaternary structure, heterodimer of AddA and AddB/RexB. Mg(2+) serves as cofactor.

It carries out the reaction Couples ATP hydrolysis with the unwinding of duplex DNA by translocating in the 3'-5' direction.. The enzyme catalyses ATP + H2O = ADP + phosphate + H(+). Its function is as follows. The heterodimer acts as both an ATP-dependent DNA helicase and an ATP-dependent, dual-direction single-stranded exonuclease. Recognizes the chi site generating a DNA molecule suitable for the initiation of homologous recombination. The AddA nuclease domain is required for chi fragment generation; this subunit has the helicase and 3' -&gt; 5' nuclease activities. The polypeptide is ATP-dependent helicase/nuclease subunit A (Bacillus anthracis).